The chain runs to 457 residues: Siroheme synthase (457 aa).

The segment at 1–204 (MDHLPIFCQL…ADEKAVNATT (204 aa)) is precorrin-2 dehydrogenase /sirohydrochlorin ferrochelatase. NAD(+)-binding positions include 22–23 (DV) and 43–44 (LT). Ser128 is modified (phosphoserine). A uroporphyrinogen-III C-methyltransferase region spans residues 216–457 (GEVVLVGAGP…RDKLNWFSNY (242 aa)). Position 225 (Pro225) interacts with S-adenosyl-L-methionine. Residue Asp248 is the Proton acceptor of the active site. Residue Lys270 is the Proton donor of the active site. Residues 301 to 303 (GGD), Ile306, 331 to 332 (TA), Met382, and Gly411 contribute to the S-adenosyl-L-methionine site.

It in the N-terminal section; belongs to the precorrin-2 dehydrogenase / sirohydrochlorin ferrochelatase family. The protein in the C-terminal section; belongs to the precorrin methyltransferase family.

The enzyme catalyses uroporphyrinogen III + 2 S-adenosyl-L-methionine = precorrin-2 + 2 S-adenosyl-L-homocysteine + H(+). The catalysed reaction is precorrin-2 + NAD(+) = sirohydrochlorin + NADH + 2 H(+). It catalyses the reaction siroheme + 2 H(+) = sirohydrochlorin + Fe(2+). The protein operates within cofactor biosynthesis; adenosylcobalamin biosynthesis; precorrin-2 from uroporphyrinogen III: step 1/1. Its pathway is cofactor biosynthesis; adenosylcobalamin biosynthesis; sirohydrochlorin from precorrin-2: step 1/1. It functions in the pathway porphyrin-containing compound metabolism; siroheme biosynthesis; precorrin-2 from uroporphyrinogen III: step 1/1. It participates in porphyrin-containing compound metabolism; siroheme biosynthesis; siroheme from sirohydrochlorin: step 1/1. The protein operates within porphyrin-containing compound metabolism; siroheme biosynthesis; sirohydrochlorin from precorrin-2: step 1/1. Functionally, multifunctional enzyme that catalyzes the SAM-dependent methylations of uroporphyrinogen III at position C-2 and C-7 to form precorrin-2 via precorrin-1. Then it catalyzes the NAD-dependent ring dehydrogenation of precorrin-2 to yield sirohydrochlorin. Finally, it catalyzes the ferrochelation of sirohydrochlorin to yield siroheme. This Salmonella dublin (strain CT_02021853) protein is Siroheme synthase.